Here is a 944-residue protein sequence, read N- to C-terminus: Translation initiation factor IF-2 (944 aa).

Disordered regions lie at residues isoleucine 61 to glutamine 157 and threonine 173 to isoleucine 281. Residues threonine 132–serine 150 show a composition bias toward polar residues. Low complexity predominate over residues serine 175 to asparagine 185. The segment covering alanine 186 to histidine 203 has biased composition (basic and acidic residues). The segment covering glutamate 204 to isoleucine 215 has biased composition (basic residues). Positions glutamate 244–lysine 259 are enriched in basic and acidic residues. Positions glutamate 443–lysine 612 constitute a tr-type G domain. The segment at glycine 452–threonine 459 is G1. Glycine 452–threonine 459 provides a ligand contact to GTP. The G2 stretch occupies residues glycine 477–histidine 481. The segment at aspartate 498–glycine 501 is G3. GTP-binding positions include aspartate 498 to histidine 502 and asparagine 552 to aspartate 555. Residues asparagine 552–aspartate 555 form a G4 region. Positions serine 588 to lysine 590 are G5.

It belongs to the TRAFAC class translation factor GTPase superfamily. Classic translation factor GTPase family. IF-2 subfamily.

It localises to the cytoplasm. One of the essential components for the initiation of protein synthesis. Protects formylmethionyl-tRNA from spontaneous hydrolysis and promotes its binding to the 30S ribosomal subunits. Also involved in the hydrolysis of GTP during the formation of the 70S ribosomal complex. The polypeptide is Translation initiation factor IF-2 (infB) (Helicobacter pylori (strain ATCC 700392 / 26695) (Campylobacter pylori)).